We begin with the raw amino-acid sequence, 149 residues long: Ribosome-binding factor A (149 aa).

The tract at residues 125–149 (FGSADEVLNEDEGATDDTDDTKGKD) is disordered. Positions 131–143 (VLNEDEGATDDTD) are enriched in acidic residues.

The protein belongs to the RbfA family. In terms of assembly, monomer. Binds 30S ribosomal subunits, but not 50S ribosomal subunits or 70S ribosomes.

The protein localises to the cytoplasm. Its function is as follows. One of several proteins that assist in the late maturation steps of the functional core of the 30S ribosomal subunit. Associates with free 30S ribosomal subunits (but not with 30S subunits that are part of 70S ribosomes or polysomes). Required for efficient processing of 16S rRNA. May interact with the 5'-terminal helix region of 16S rRNA. The polypeptide is Ribosome-binding factor A (Shewanella sp. (strain W3-18-1)).